Here is a 236-residue protein sequence, read N- to C-terminus: Small ribosomal subunit protein uS2c (236 aa).

As to quaternary structure, component of the chloroplast small ribosomal subunit (SSU). Mature 70S chloroplast ribosomes of higher plants consist of a small (30S) and a large (50S) subunit. The 30S small subunit contains 1 molecule of ribosomal RNA (16S rRNA) and 24 different proteins. The 50S large subunit contains 3 rRNA molecules (23S, 5S and 4.5S rRNA) and 33 different proteins.

Its subcellular location is the plastid. The protein resides in the chloroplast. In terms of biological role, component of the chloroplast ribosome (chloro-ribosome), a dedicated translation machinery responsible for the synthesis of chloroplast genome-encoded proteins, including proteins of the transcription and translation machinery and components of the photosynthetic apparatus. The protein is Small ribosomal subunit protein uS2c (rps2) of Spinacia oleracea (Spinach).